Consider the following 407-residue polypeptide: Serine hydroxymethyltransferase (407 aa).

Residues tyrosine 51 and 94-95 (GS) contribute to the pyridoxal 5'-phosphate site. (6S)-5,6,7,8-tetrahydrofolate is bound by residues leucine 117 and 121–123 (GHL). Residues serine 172, histidine 200, and histidine 225 each coordinate pyridoxal 5'-phosphate. Lysine 226 carries the post-translational modification N6-(pyridoxal phosphate)lysine. (6S)-5,6,7,8-tetrahydrofolate is bound at residue glutamate 242. Glycine 258 contacts pyridoxal 5'-phosphate.

Belongs to the SHMT family. As to quaternary structure, homodimer. Pyridoxal 5'-phosphate serves as cofactor.

It is found in the cytoplasm. It catalyses the reaction (6R)-5,10-methylene-5,6,7,8-tetrahydrofolate + glycine + H2O = (6S)-5,6,7,8-tetrahydrofolate + L-serine. The protein operates within one-carbon metabolism; tetrahydrofolate interconversion. It participates in amino-acid biosynthesis; glycine biosynthesis; glycine from L-serine: step 1/1. Its function is as follows. Catalyzes the reversible interconversion of serine and glycine with tetrahydrofolate (THF) serving as the one-carbon carrier. This reaction serves as the major source of one-carbon groups required for the biosynthesis of purines, thymidylate, methionine, and other important biomolecules. Also exhibits THF-independent aldolase activity toward beta-hydroxyamino acids, producing glycine and aldehydes, via a retro-aldol mechanism. This chain is Serine hydroxymethyltransferase, found in Thermus thermophilus (strain ATCC 27634 / DSM 579 / HB8).